A 283-amino-acid polypeptide reads, in one-letter code: Phosphatidylserine decarboxylase proenzyme (283 aa).

Catalysis depends on charge relay system; for autoendoproteolytic cleavage activity residues Asp-96, His-152, and Ser-250. The active-site Schiff-base intermediate with substrate; via pyruvic acid; for decarboxylase activity is the Ser-250. Ser-250 carries the pyruvic acid (Ser); by autocatalysis modification.

It belongs to the phosphatidylserine decarboxylase family. PSD-B subfamily. Prokaryotic type I sub-subfamily. In terms of assembly, heterodimer of a large membrane-associated beta subunit and a small pyruvoyl-containing alpha subunit. Pyruvate is required as a cofactor. In terms of processing, is synthesized initially as an inactive proenzyme. Formation of the active enzyme involves a self-maturation process in which the active site pyruvoyl group is generated from an internal serine residue via an autocatalytic post-translational modification. Two non-identical subunits are generated from the proenzyme in this reaction, and the pyruvate is formed at the N-terminus of the alpha chain, which is derived from the carboxyl end of the proenzyme. The autoendoproteolytic cleavage occurs by a canonical serine protease mechanism, in which the side chain hydroxyl group of the serine supplies its oxygen atom to form the C-terminus of the beta chain, while the remainder of the serine residue undergoes an oxidative deamination to produce ammonia and the pyruvoyl prosthetic group on the alpha chain. During this reaction, the Ser that is part of the protease active site of the proenzyme becomes the pyruvoyl prosthetic group, which constitutes an essential element of the active site of the mature decarboxylase.

The protein resides in the cell membrane. The enzyme catalyses a 1,2-diacyl-sn-glycero-3-phospho-L-serine + H(+) = a 1,2-diacyl-sn-glycero-3-phosphoethanolamine + CO2. Its pathway is phospholipid metabolism; phosphatidylethanolamine biosynthesis; phosphatidylethanolamine from CDP-diacylglycerol: step 2/2. Functionally, catalyzes the formation of phosphatidylethanolamine (PtdEtn) from phosphatidylserine (PtdSer). The sequence is that of Phosphatidylserine decarboxylase proenzyme from Acinetobacter baumannii (strain SDF).